A 119-amino-acid chain; its full sequence is U-scoloptoxin(16)-Er11a (119 aa).

The N-terminal stretch at 1-19 (MKSWTAAVLSLGLIYLSIS) is a signal peptide.

Belongs to the scoloptoxin-16 family. In terms of processing, contains 4 disulfide bonds. Expressed by the venom gland.

The protein resides in the secreted. This Ethmostigmus rubripes (Giant centipede) protein is U-scoloptoxin(16)-Er11a.